We begin with the raw amino-acid sequence, 207 residues long: Large ribosomal subunit protein uL4 (207 aa).

The tract at residues 49 to 78 is disordered; the sequence is HAVKNRSAVSGGGRKPWRQKGTGRARQGSI.

Belongs to the universal ribosomal protein uL4 family. Part of the 50S ribosomal subunit.

Its function is as follows. One of the primary rRNA binding proteins, this protein initially binds near the 5'-end of the 23S rRNA. It is important during the early stages of 50S assembly. It makes multiple contacts with different domains of the 23S rRNA in the assembled 50S subunit and ribosome. In terms of biological role, forms part of the polypeptide exit tunnel. The chain is Large ribosomal subunit protein uL4 (rplD) from Streptococcus pyogenes serotype M1.